We begin with the raw amino-acid sequence, 205 residues long: MLTIALSKGRILEQTLPLLEKSGLIIAKEELNSRKLILDTNLTDVQVIIIRATDVPVFVQHGAADIGIAGKDVLLEHGANNLFEVLDLDITKCKLMVAAESKDKLKQNTLKIATKYVNSTKRYFQNKGQSCEIIKLYGAMELAPKVGLAHCIVDLVDTGNTLKANGLIAVERIEEISSRLVVNTASFKTKNAQIKSWIQNIEYNL.

Belongs to the ATP phosphoribosyltransferase family. Short subfamily. Heteromultimer composed of HisG and HisZ subunits.

The protein localises to the cytoplasm. The catalysed reaction is 1-(5-phospho-beta-D-ribosyl)-ATP + diphosphate = 5-phospho-alpha-D-ribose 1-diphosphate + ATP. Its pathway is amino-acid biosynthesis; L-histidine biosynthesis; L-histidine from 5-phospho-alpha-D-ribose 1-diphosphate: step 1/9. In terms of biological role, catalyzes the condensation of ATP and 5-phosphoribose 1-diphosphate to form N'-(5'-phosphoribosyl)-ATP (PR-ATP). Has a crucial role in the pathway because the rate of histidine biosynthesis seems to be controlled primarily by regulation of HisG enzymatic activity. The chain is ATP phosphoribosyltransferase from Ruthia magnifica subsp. Calyptogena magnifica.